A 200-amino-acid chain; its full sequence is MAHVLPDLPYAYDALEPYISRQIMELHHKKTSSDLCECAQHCRGCLRHSTAVVGGFDLSLFFILTTLGHINHSLFWQNLAPAAGAGGQLKPGPLKDAIDQTFGGLDNLKKEFNTTTAGIQGSGWGWLGVNPSNKRLEISTTPNQDPLLNLVPIIGVDIWEHAFYLQYLNVKADYLNAIWSVINFDEAQRRYVEATQGSKL.

The Mn(2+) site is built by His-27, His-72, Asp-157, and His-161.

Belongs to the iron/manganese superoxide dismutase family. It depends on Mn(2+) as a cofactor.

The protein localises to the mitochondrion matrix. The enzyme catalyses 2 superoxide + 2 H(+) = H2O2 + O2. Functionally, destroys superoxide anion radicals which are normally produced within the cells and which are toxic to biological systems. This chain is Superoxide dismutase [Mn], mitochondrial (sod), found in Agaricus bisporus (White button mushroom).